Consider the following 206-residue polypeptide: Large ribosomal subunit protein uL4 (206 aa).

The tract at residues 47 to 94 is disordered; sequence NRAQKGRAEVSKSTRKPWRQKGTGRARAGMASSPLWRGGGRVFPNSPE. Basic residues predominate over residues 59–70; it reads STRKPWRQKGTG.

It belongs to the universal ribosomal protein uL4 family. Part of the 50S ribosomal subunit.

One of the primary rRNA binding proteins, this protein initially binds near the 5'-end of the 23S rRNA. It is important during the early stages of 50S assembly. It makes multiple contacts with different domains of the 23S rRNA in the assembled 50S subunit and ribosome. In terms of biological role, forms part of the polypeptide exit tunnel. The polypeptide is Large ribosomal subunit protein uL4 (Aromatoleum aromaticum (strain DSM 19018 / LMG 30748 / EbN1) (Azoarcus sp. (strain EbN1))).